The following is a 609-amino-acid chain: Thiamine metabolism regulatory protein THI3 (609 aa).

The segment at 578 to 598 (SKQVQEENENSSAVNTPTPEF) is disordered.

Belongs to the TPP enzyme family. Mg(2+) serves as cofactor. Requires thiamine diphosphate as cofactor.

Its subcellular location is the nucleus. It catalyses the reaction 4-methyl-2-oxopentanoate + H(+) = 3-methylbutanal + CO2. The catalysed reaction is (S)-3-methyl-2-oxopentanoate + H(+) = 2-methylbutanal + CO2. It participates in amino-acid degradation; Ehrlich pathway. In terms of biological role, one of five 2-oxo acid decarboxylases (PDC1, PDC5, PDC6, ARO10, and THI3) involved in amino acid catabolism. The enzyme catalyzes the decarboxylation of amino acids, which, in a first step, have been transaminated to the corresponding 2-oxo acids (alpha-keto-acids). In a third step, the resulting aldehydes are reduced to alcohols, collectively referred to as fusel oils or alcohols. Its preferred substrates are the transaminated amino acids derived from leucine (4-methyl-2-oxopentanoate, also alpha-keto-isocaproate) and isoleucine ((3S)-3-methyl-2-oxopentanoate, also alpha-keto-beta-methylvalerate), whereas transaminated valine, transaminated aromatic amino acids, and pyruvate are no substrates. In analogy to the pyruvate decarboxylases the enzyme may in a side-reaction catalyze condensation (or carboligation) reactions leading to the formation of 2-hydroxy ketone, collectively called acyloins. The enzyme is also positively regulating the thiamine metabolism by a molecular mechanism that may involve thiamine concentration sensing and signal transmission. In Saccharomyces cerevisiae (strain ATCC 204508 / S288c) (Baker's yeast), this protein is Thiamine metabolism regulatory protein THI3 (THI3).